The chain runs to 150 residues: uncharacterized protein (150 aa).

The protein belongs to the Dps family.

This is an uncharacterized protein from Kitasatospora aureofaciens (Streptomyces aureofaciens).